Reading from the N-terminus, the 735-residue chain is Disintegrin and metalloproteinase domain-containing protein 2 (735 aa).

A signal peptide spans 1–18; sequence MWLILLLLSGLSELGGLS. A propeptide spanning residues 19–180 is cleaved from the precursor; that stretch reads QSQTEGTREK…YKIRSIKPQR (162 aa). Residues 19–686 are Extracellular-facing; sequence QSQTEGTREK…ASAYRSKSPR (668 aa). 3 N-linked (GlcNAc...) asparagine glycosylation sites follow: Asn128, Asn226, and Asn279. Residues 184 to 381 enclose the Peptidase M12B domain; sequence HYLEIHIVVE…QSSHCLQNQP (198 aa). 4 cysteine pairs are disulfide-bonded: Cys293–Cys376, Cys335–Cys360, Cys337–Cys342, and Cys449–Cys469. Asn359, Asn463, Asn489, Asn569, and Asn585 each carry an N-linked (GlcNAc...) asparagine glycan. Positions 389 to 476 constitute a Disintegrin domain; that stretch reads MAVCGNGEVE…EVCEDFFVQN (88 aa). The EGF-like domain maps to 615–648; the sequence is LGYDCNLEKCNHHGVCNNKKNCHCDPTYLPPDCK. 3 disulfides stabilise this stretch: Cys619/Cys630, Cys624/Cys636, and Cys638/Cys647. Residues 687–707 traverse the membrane as a helical segment; it reads WPFFLIIPFYVVILVLIGMLV. Topologically, residues 708–735 are cytoplasmic; it reads KVYSQRMKWRMDDFSSEEQFESESESKD. At Ser729 the chain carries Phosphoserine.

As to quaternary structure, heterodimer with ADAM1/fertilin subunit alpha. Post-translationally, the signal and the metalloprotease domain are cleaved during the epididymal maturation of the spermatozoa. In terms of tissue distribution, expressed in the testis and testicular sperm (at protein level).

It is found in the membrane. Sperm surface membrane protein that may be involved in sperm-egg plasma membrane adhesion and fusion during fertilization. Could have a direct role in sperm-zona binding or migration of sperm from the uterus into the oviduct. Interactions with egg membrane could be mediated via binding between its disintegrin-like domain to one or more integrins receptors on the egg. This is a non catalytic metalloprotease-like protein. This chain is Disintegrin and metalloproteinase domain-containing protein 2, found in Mus musculus (Mouse).